A 261-amino-acid chain; its full sequence is Lipase LipV (261 aa).

Serine 87 acts as the Nucleophile in catalysis. Catalysis depends on charge relay system residues aspartate 217 and histidine 240.

This sequence belongs to the AB hydrolase superfamily.

The enzyme catalyses a carboxylic ester + H2O = an alcohol + a carboxylate + H(+). It carries out the reaction a tetradecanoate ester + H2O = an aliphatic alcohol + tetradecanoate + H(+). It catalyses the reaction decanoate ester + H2O = decanoate + an aliphatic alcohol + H(+). The catalysed reaction is an octanoate ester + H2O = an aliphatic alcohol + octanoate + H(+). The enzyme catalyses a dodecanoate ester + H2O = an aliphatic alcohol + dodecanoate + H(+). It carries out the reaction a butanoate ester + H2O = an aliphatic alcohol + butanoate + H(+). It catalyses the reaction hexadecanoate ester + H2O = an aliphatic alcohol + hexadecanoate + H(+). The catalysed reaction is octadecanoate ester + H2O = an aliphatic alcohol + octadecanoate + H(+). Is inhibited by tetrahydrolipstatin, a specific lipase inhibitor and RHC 80267, a diacylglycerol lipase inhibitor, but not by phenylglyoxal and iodoacetate. Functionally, lipase that displays broad substrate specificity and preferentially hydrolyzes p-nitrophenyl myristate in vitro. Also shows significant activity with pNP-butyrate (68%), pNP-octanoate (82%), pNP-decanoate (90%), and pNP-laurate (74%). Is probably involved in lipid catabolism. Is active at low pH, and might play some important role in mycobacterial biology in macrophages where the bacteria encounters acidic stress. The protein is Lipase LipV of Mycobacterium tuberculosis (strain ATCC 25618 / H37Rv).